Here is a 371-residue protein sequence, read N- to C-terminus: Ferrochelatase (371 aa).

Residues H218 and E299 each coordinate Fe cation.

Belongs to the ferrochelatase family.

The protein resides in the cytoplasm. It catalyses the reaction heme b + 2 H(+) = protoporphyrin IX + Fe(2+). The protein operates within porphyrin-containing compound metabolism; protoheme biosynthesis; protoheme from protoporphyrin-IX: step 1/1. Catalyzes the ferrous insertion into protoporphyrin IX. This Ralstonia pickettii (strain 12J) protein is Ferrochelatase.